The primary structure comprises 538 residues: Syncytin-2 (538 aa).

Residues 1 to 15 (MGLLLLVLILTPSLA) form the signal peptide. Residues 16-478 (AYRHPDFPLL…GWLNWEGTWK (463 aa)) lie on the Extracellular side of the membrane. The CXXC motif lies at 43–46 (CWLC). Intrachain disulfides connect Cys-43–Cys-46, Cys-43–Cys-439, and Cys-431–Cys-438. Asn-133, Asn-146, Asn-177, Asn-220, Asn-241, Asn-247, Asn-312, and Asn-332 each carry an N-linked (GlcNAc...) asparagine glycan. The tract at residues 354–374 (FIPLLAGLGILAGTGTGIAGI) is fusion peptide. The CKS-17 motif lies at 414 to 430 (LQNRRGLDMLTAAQGGI). The short motif at 431–439 (CLALDEKCC) is the CX6CC element. N-linked (GlcNAc...) asparagine glycosylation occurs at Asn-443. A helical membrane pass occupies residues 479–499 (WFSWVLPLTGPLVSLLLLLLF). Over 500–538 (GPCLLNLITQFVSSRLQAIKLQTNLSAGRRPRNIQESPF) the chain is Cytoplasmic.

It belongs to the gamma type-C retroviral envelope protein family. HERV class-I FRD env subfamily. As to quaternary structure, the surface and transmembrane proteins form a heterodimer. They are attached by non-covalent interactions or by a labile interchain disulfide bond. Post-translationally, specific enzymatic cleavages in vivo yield the mature SU and TM proteins. The CXXC motif is highly conserved across a broad range of retroviral envelope proteins. It is thought to participate in the formation of a labile disulfide bond possibly with the CX6CC motif present in the transmembrane protein.

The protein localises to the virion. The protein resides in the cell membrane. In terms of biological role, this endogenous retroviral envelope protein has retained its original fusogenic properties and participates in trophoblast fusion and the formation of a syncytium during placenta morphogenesis. The interaction with MFSD2A is apparently important for this process. Functionally, endogenous envelope proteins may have kept, lost or modified their original function during evolution but this one can still make pseudotypes with MLV, HIV-1 or SIV-1 virions and confer infectivity. Retroviral envelope proteins mediate receptor recognition and membrane fusion during early infection. The surface protein mediates receptor recognition, while the transmembrane protein anchors the envelope heterodimer to the viral membrane through one transmembrane domain. The other hydrophobic domain, called fusion peptide, mediates fusion of the viral membrane with the target cell membrane. The polypeptide is Syncytin-2 (ERVFRD-1) (Gorilla gorilla gorilla (Western lowland gorilla)).